The following is a 97-amino-acid chain: Carboxysome shell protein CsoS1B (97 aa).

The BMC domain maps to 8–93 (ALGMIETRGL…PHKEVEPVLT (86 aa)).

Belongs to the bacterial microcompartments protein family. CsoS1 subfamily. Homohexamer with a small central pore.

Its subcellular location is the carboxysome. One of shell proteins of the carboxysome, a polyhedral inclusion where RuBisCO (ribulose bisphosphate carboxylase, ccbL-ccbS) is sequestered. Assembles into hexamers which make sheets that form the facets of the polyhedral carboxysome. The shell probably limits the diffusion of CO(2) into and out of the carboxysome. This Hydrogenovibrio crunogenus (strain DSM 25203 / XCL-2) (Thiomicrospira crunogena) protein is Carboxysome shell protein CsoS1B.